We begin with the raw amino-acid sequence, 351 residues long: UDP-glucose 4-epimerase 5 (351 aa).

Residues 13-15 (GYI), 34-38 (DNLDN), 64-65 (DL), phenylalanine 86, and lysine 90 each bind NAD(+). 130–132 (SAT) lines the substrate pocket. Residue tyrosine 154 is the Proton acceptor of the active site. 2 residues coordinate NAD(+): lysine 158 and tyrosine 182. Substrate is bound by residues 182 to 184 (YFN), 203 to 205 (NNL), 221 to 223 (TVF), arginine 236, and 298 to 301 (RPGD).

The protein belongs to the NAD(P)-dependent epimerase/dehydratase family. As to quaternary structure, forms homodimers and heterodimers. The cofactor is NAD(+). Widely expressed.

The catalysed reaction is UDP-alpha-D-glucose = UDP-alpha-D-galactose. It functions in the pathway carbohydrate metabolism; galactose metabolism. With respect to regulation, enhanced activity by NaCl. Inhibited by UDP. Its function is as follows. Catalyzes the interconversion between UDP-glucose and UDP-galactose. The polypeptide is UDP-glucose 4-epimerase 5 (Arabidopsis thaliana (Mouse-ear cress)).